A 151-amino-acid polypeptide reads, in one-letter code: D-aminoacyl-tRNA deacylase (151 aa).

The Gly-cisPro motif, important for rejection of L-amino acids signature appears at 136–137 (GP).

The protein belongs to the DTD family. Homodimer.

The protein resides in the cytoplasm. The enzyme catalyses glycyl-tRNA(Ala) + H2O = tRNA(Ala) + glycine + H(+). It carries out the reaction a D-aminoacyl-tRNA + H2O = a tRNA + a D-alpha-amino acid + H(+). Its function is as follows. An aminoacyl-tRNA editing enzyme that deacylates mischarged D-aminoacyl-tRNAs. Also deacylates mischarged glycyl-tRNA(Ala), protecting cells against glycine mischarging by AlaRS. Acts via tRNA-based rather than protein-based catalysis; rejects L-amino acids rather than detecting D-amino acids in the active site. By recycling D-aminoacyl-tRNA to D-amino acids and free tRNA molecules, this enzyme counteracts the toxicity associated with the formation of D-aminoacyl-tRNA entities in vivo and helps enforce protein L-homochirality. This Streptococcus gordonii (strain Challis / ATCC 35105 / BCRC 15272 / CH1 / DL1 / V288) protein is D-aminoacyl-tRNA deacylase.